The following is a 364-amino-acid chain: MQDRQKAQDYRALLLADTPLIDVRAPIEFEQGAMPGAINLPLMIDDERAAVGTCYKRQGADAALALGHRLVCGDIRQQRLEAWKAAYQRFPNGYLCCARGGQRSHIVQRWLQETGIDCPLIEGGYKALRQTAIQATWQLAQKPILLIGGCTGSGKTQLVRQQPNGVDLEGLARHRGSSFGRTLNPQLSQASFENKLAVELLKINARQTLKRWVLEDEGRTIGANHLPECLRERMAQAPIAVVEDPFALRLERLREEYFIRMHHDFTHAYGDEAGWQAYSEYLHHGLFAIRRRLGLQRFAELTDTLDRALAEQLSSGSTDGHMAWLVPLLNEYYDPMYRYQLEKKAANIVFRGTWQEVANWLKAQ.

In terms of domain architecture, Rhodanese spans 14-137 (LLADTPLIDV…LRQTAIQATW (124 aa)). Cys-97 functions as the S-selanylcysteine intermediate in the catalytic mechanism.

Belongs to the SelU family. In terms of assembly, monomer.

The catalysed reaction is 5-methylaminomethyl-2-thiouridine(34) in tRNA + selenophosphate + (2E)-geranyl diphosphate + H2O + H(+) = 5-methylaminomethyl-2-selenouridine(34) in tRNA + (2E)-thiogeraniol + phosphate + diphosphate. It carries out the reaction 5-methylaminomethyl-2-thiouridine(34) in tRNA + (2E)-geranyl diphosphate = 5-methylaminomethyl-S-(2E)-geranyl-thiouridine(34) in tRNA + diphosphate. The enzyme catalyses 5-methylaminomethyl-S-(2E)-geranyl-thiouridine(34) in tRNA + selenophosphate + H(+) = 5-methylaminomethyl-2-(Se-phospho)selenouridine(34) in tRNA + (2E)-thiogeraniol. It catalyses the reaction 5-methylaminomethyl-2-(Se-phospho)selenouridine(34) in tRNA + H2O = 5-methylaminomethyl-2-selenouridine(34) in tRNA + phosphate. In terms of biological role, involved in the post-transcriptional modification of the uridine at the wobble position (U34) of tRNA(Lys), tRNA(Glu) and tRNA(Gln). Catalyzes the conversion of 2-thiouridine (S2U-RNA) to 2-selenouridine (Se2U-RNA). Acts in a two-step process involving geranylation of 2-thiouridine (S2U) to S-geranyl-2-thiouridine (geS2U) and subsequent selenation of the latter derivative to 2-selenouridine (Se2U) in the tRNA chain. The chain is tRNA 2-selenouridine synthase from Salmonella gallinarum (strain 287/91 / NCTC 13346).